We begin with the raw amino-acid sequence, 405 residues long: MSTIKKVVLAYSGGLDTSVILKWLQETYDCEVVTFTADIGQGEEVAPARAKAETLGVKEIYIEDLREEFCRDYVFPMFRANTLYEGEYLLGTSIARPLIAKRLAEIASATGADAVAHGATGKGNDQVRFELGVYALQPDIQVIAPWREWDLTSREKLLAYAETHGIPVEGKRGGRSPYSMDANLLHISYEGGPLEDPWFEPEESMWRWTTSPEASADQAAYLELDYRCGDIVAINGEVLSPAKVLESLNQLGSKHGIGRLDLVENRYVGMKSRGCYETPAGTIMLKAHRALESLTLDREVTHLKDELMPRYANLIYNGYWWSPERSLLQQLIDGSQVTVNGTVRLKLYKGNVVVVGRRSETDSLFAPEIATFEDDAGAYNQQDAEGFIKLNALRLRIEALKKQTH.

ATP-binding positions include 10–18 and A37; that span reads AYSGGLDTS. L-citrulline-binding residues include Y88 and S93. G118 provides a ligand contact to ATP. L-aspartate is bound by residues T120, N124, and D125. N124 contacts L-citrulline. Residues R128, S179, S188, E264, and Y276 each coordinate L-citrulline.

Belongs to the argininosuccinate synthase family. Type 1 subfamily. Homotetramer.

The protein localises to the cytoplasm. It carries out the reaction L-citrulline + L-aspartate + ATP = 2-(N(omega)-L-arginino)succinate + AMP + diphosphate + H(+). It functions in the pathway amino-acid biosynthesis; L-arginine biosynthesis; L-arginine from L-ornithine and carbamoyl phosphate: step 2/3. The polypeptide is Argininosuccinate synthase (Nitrosococcus oceani (strain ATCC 19707 / BCRC 17464 / JCM 30415 / NCIMB 11848 / C-107)).